Here is a 687-residue protein sequence, read N- to C-terminus: DNA ligase (687 aa).

NAD(+) contacts are provided by residues 34 to 38 (DAEYD), 83 to 84 (SL), and Glu117. Lys119 serves as the catalytic N6-AMP-lysine intermediate. NAD(+) contacts are provided by Arg140, Glu182, Lys298, and Lys322. Zn(2+) is bound by residues Cys416, Cys419, Cys434, and Cys439. The BRCT domain occupies 609–687 (EARGPFAGKT…EEEFVRLLKE (79 aa)).

Belongs to the NAD-dependent DNA ligase family. LigA subfamily. Requires Mg(2+) as cofactor. Mn(2+) is required as a cofactor.

It carries out the reaction NAD(+) + (deoxyribonucleotide)n-3'-hydroxyl + 5'-phospho-(deoxyribonucleotide)m = (deoxyribonucleotide)n+m + AMP + beta-nicotinamide D-nucleotide.. In terms of biological role, DNA ligase that catalyzes the formation of phosphodiester linkages between 5'-phosphoryl and 3'-hydroxyl groups in double-stranded DNA using NAD as a coenzyme and as the energy source for the reaction. It is essential for DNA replication and repair of damaged DNA. This chain is DNA ligase, found in Anaeromyxobacter dehalogenans (strain 2CP-1 / ATCC BAA-258).